The primary structure comprises 568 residues: Potassium-transporting ATPase potassium-binding subunit (568 aa).

10 helical membrane-spanning segments follow: residues 3 to 23 (TEVLGVIAQIVLMVVLSYPLG), 68 to 88 (LLVVNLFWFLWGMVLLVTQGV), 133 to 153 (FVIMLFQFITAATGMAAMAGI), 180 to 200 (LLPLSLVVGFILIVQGTPMGF), 256 to 276 (VECWSILIIPMAMAFAFGFYL), 281 to 301 (LGYSIYGVMLFAYLVGVCINV), 375 to 395 (FGGVGVGWMNYFTFIIIAVFI), 421 to 441 (IVALLHPFIILVGTALAAYLF), 497 to 517 (IVLILGRFVPIVGQVAIAGIL), and 535 to 555 (VTFGVMTFAVIFIVAALSFFP).

It belongs to the KdpA family. As to quaternary structure, the system is composed of three essential subunits: KdpA, KdpB and KdpC.

The protein resides in the cell inner membrane. Part of the high-affinity ATP-driven potassium transport (or Kdp) system, which catalyzes the hydrolysis of ATP coupled with the electrogenic transport of potassium into the cytoplasm. This subunit binds the periplasmic potassium ions and delivers the ions to the membrane domain of KdpB through an intramembrane tunnel. The protein is Potassium-transporting ATPase potassium-binding subunit of Phocaeicola vulgatus (strain ATCC 8482 / DSM 1447 / JCM 5826 / CCUG 4940 / NBRC 14291 / NCTC 11154) (Bacteroides vulgatus).